We begin with the raw amino-acid sequence, 211 residues long: uncharacterized protein (211 aa).

2 disordered regions span residues 1 to 73 and 96 to 123; these read MLRR…SKLK and TNAAKEEKLRMAPSPTQSTRSESDASLS. Polar residues-rich tracts occupy residues 26–35 and 53–62; these read SKSSLISLTS and APSQFLSPTN. The segment covering 63 to 73 has biased composition (low complexity); the sequence is KRSTSSQSKLK. S182 bears the Phosphoserine mark. A Phosphothreonine modification is found at T184. Position 186 is a phosphoserine (S186).

This is an uncharacterized protein from Saccharomyces cerevisiae (strain ATCC 204508 / S288c) (Baker's yeast).